Consider the following 433-residue polypeptide: Aspartate--tRNA(Asp/Asn) ligase (433 aa).

Glu-167 lines the L-aspartate pocket. The interval 189–192 is aspartate; the sequence is QLFK. Arg-211 contacts L-aspartate. ATP-binding positions include 211 to 213, 219 to 221, and Glu-356; these read RAE and RHL. The Mg(2+) site is built by Glu-356 and Ser-359. Residues Ser-359 and Arg-363 each contribute to the L-aspartate site. 404–407 is an ATP binding site; the sequence is GGER.

Belongs to the class-II aminoacyl-tRNA synthetase family. Type 2 subfamily. Homodimer. Mg(2+) is required as a cofactor.

Its subcellular location is the cytoplasm. The catalysed reaction is tRNA(Asx) + L-aspartate + ATP = L-aspartyl-tRNA(Asx) + AMP + diphosphate. In terms of biological role, aspartyl-tRNA synthetase with relaxed tRNA specificity since it is able to aspartylate not only its cognate tRNA(Asp) but also tRNA(Asn). Reaction proceeds in two steps: L-aspartate is first activated by ATP to form Asp-AMP and then transferred to the acceptor end of tRNA(Asp/Asn). This is Aspartate--tRNA(Asp/Asn) ligase from Natronomonas pharaonis (strain ATCC 35678 / DSM 2160 / CIP 103997 / JCM 8858 / NBRC 14720 / NCIMB 2260 / Gabara) (Halobacterium pharaonis).